The following is a 297-amino-acid chain: Cytidine deaminase (297 aa).

CMP/dCMP-type deaminase domains are found at residues Ser-54–Lys-174 and Leu-192–Val-297. Residue Asn-95–Glu-97 coordinates substrate. His-108 serves as a coordination point for Zn(2+). The active-site Proton donor is Glu-110. Residues Cys-135 and Cys-138 each coordinate Zn(2+).

The protein belongs to the cytidine and deoxycytidylate deaminase family. In terms of assembly, homodimer. Zn(2+) is required as a cofactor.

It catalyses the reaction cytidine + H2O + H(+) = uridine + NH4(+). The enzyme catalyses 2'-deoxycytidine + H2O + H(+) = 2'-deoxyuridine + NH4(+). Functionally, this enzyme scavenges exogenous and endogenous cytidine and 2'-deoxycytidine for UMP synthesis. The protein is Cytidine deaminase of Actinobacillus pleuropneumoniae serotype 5b (strain L20).